The following is a 163-amino-acid chain: Sperm surface protein Sp17 (163 aa).

2 disordered regions span residues 57-115 and 129-163; these read PAEW…EKEE and VARE…THEK. Basic and acidic residues-rich tracts occupy residues 62-98 and 129-139; these read SKVE…KEEE and VAREEVKKMKT. In terms of domain architecture, IQ spans 114–143; the sequence is EEVAAVKIQAAFRGHVAREEVKKMKTDSLQ. Residues 153–163 are compositionally biased toward polar residues; the sequence is DTGFTSRTHEK.

Homodimer. May interact with ROPN1. As to expression, testis- and sperm-specific.

The protein localises to the membrane. In terms of biological role, sperm surface zona pellucida binding protein. Helps to bind spermatozoa to the zona pellucida with high affinity. Might function in binding zona pellucida and carbohydrates. The protein is Sperm surface protein Sp17 (SPA17) of Papio hamadryas (Hamadryas baboon).